The primary structure comprises 224 residues: Urease accessory protein UreG (224 aa).

Basic residues predominate over residues 1-20; that stretch reads MATHSHPHSHTVPARPRRVR. The tract at residues 1–25 is disordered; it reads MATHSHPHSHTVPARPRRVRKPGEP. 32–39 is a binding site for GTP; it reads GPVGSGKT.

The protein belongs to the SIMIBI class G3E GTPase family. UreG subfamily. Homodimer. UreD, UreF and UreG form a complex that acts as a GTP-hydrolysis-dependent molecular chaperone, activating the urease apoprotein by helping to assemble the nickel containing metallocenter of UreC. The UreE protein probably delivers the nickel.

Its subcellular location is the cytoplasm. Facilitates the functional incorporation of the urease nickel metallocenter. This process requires GTP hydrolysis, probably effectuated by UreG. The polypeptide is Urease accessory protein UreG (Mycobacterium bovis (strain ATCC BAA-935 / AF2122/97)).